The chain runs to 345 residues: uncharacterized protein (345 aa).

The next 2 helical transmembrane spans lie at 23–43 (VVGF…YSYV) and 56–76 (FLIA…FVAL). Residues 326–345 (VTEPTTNSKRKPVKAKKAKK) form a disordered region. Residues 333 to 345 (SKRKPVKAKKAKK) are compositionally biased toward basic residues.

The protein resides in the cell membrane. This is an uncharacterized protein from Mycoplasma pneumoniae (strain ATCC 29342 / M129 / Subtype 1) (Mycoplasmoides pneumoniae).